Reading from the N-terminus, the 346-residue chain is Probable electron transfer flavoprotein subunit alpha, mitochondrial (346 aa).

285–313 (LYVAIGISGAIQHLAGMKESKMIIAINKD) contacts FAD.

This sequence belongs to the ETF alpha-subunit/FixB family. As to quaternary structure, heterodimer of an alpha and a beta subunit. FAD serves as cofactor.

The protein localises to the mitochondrion matrix. The electron transfer flavoprotein serves as a specific electron acceptor for several dehydrogenases, including five acyl-CoA dehydrogenases, glutaryl-CoA and sarcosine dehydrogenase. It transfers the electrons to the main mitochondrial respiratory chain via ETF-ubiquinone oxidoreductase (ETF dehydrogenase). This is Probable electron transfer flavoprotein subunit alpha, mitochondrial (ETF1) from Cryptococcus neoformans var. neoformans serotype D (strain B-3501A) (Filobasidiella neoformans).